A 31-amino-acid chain; its full sequence is Photosystem II reaction center protein T (31 aa).

The helical transmembrane segment at 3–23 (ALVYVFLLTGTLMVIFFAIFF) threads the bilayer.

This sequence belongs to the PsbT family. As to quaternary structure, PSII is composed of 1 copy each of membrane proteins PsbA, PsbB, PsbC, PsbD, PsbE, PsbF, PsbH, PsbI, PsbJ, PsbK, PsbL, PsbM, PsbT, PsbX, PsbY, PsbZ, Psb30/Ycf12, at least 3 peripheral proteins of the oxygen-evolving complex and a large number of cofactors. It forms dimeric complexes.

The protein localises to the plastid. It localises to the chloroplast thylakoid membrane. In terms of biological role, found at the monomer-monomer interface of the photosystem II (PS II) dimer, plays a role in assembly and dimerization of PSII. PSII is a light-driven water plastoquinone oxidoreductase, using light energy to abstract electrons from H(2)O, generating a proton gradient subsequently used for ATP formation. This is Photosystem II reaction center protein T from Pyropia yezoensis (Susabi-nori).